The following is a 432-amino-acid chain: Glutamate-1-semialdehyde 2,1-aminomutase (432 aa).

An N6-(pyridoxal phosphate)lysine modification is found at Lys-265.

The protein belongs to the class-III pyridoxal-phosphate-dependent aminotransferase family. HemL subfamily. As to quaternary structure, homodimer. The cofactor is pyridoxal 5'-phosphate.

Its subcellular location is the cytoplasm. The catalysed reaction is (S)-4-amino-5-oxopentanoate = 5-aminolevulinate. The protein operates within porphyrin-containing compound metabolism; protoporphyrin-IX biosynthesis; 5-aminolevulinate from L-glutamyl-tRNA(Glu): step 2/2. This chain is Glutamate-1-semialdehyde 2,1-aminomutase, found in Vibrio cholerae serotype O1 (strain ATCC 39541 / Classical Ogawa 395 / O395).